Consider the following 240-residue polypeptide: Terpene cyclase cdmG (240 aa).

Transmembrane regions (helical) follow at residues 16-36 (YASIVDAATLVQGFLWALNYG), 48-68 (YGMAIFPLCCNYAWELVYTVI), 78-98 (IIMTTWLILNSIMMGFTIKFA), 112-132 (IPFIFLAGVAAFVIAQLALAA), 134-154 (VGPGLAMNWVAALCYLLLTIG), and 167-187 (GVSYTMWLSRFVGTYVGVICV). Asparagine 197 carries N-linked (GlcNAc...) asparagine glycosylation. Residues 205 to 225 (IMKCFSGISLAVEIVYGVTLW) form a helical membrane-spanning segment.

The protein belongs to the paxB family.

The protein resides in the membrane. The enzyme catalyses verruculide C epoxide = 3-hydroxypentacecilide A. It participates in secondary metabolite biosynthesis; terpenoid biosynthesis. Its function is as follows. Terpene cyclase; part of the gene cluster that mediates the biosynthesis of chrodrimanin B, a meroterpenoid that acts as a potent blocker of insect GABA-gated chloride channels. The first step of the pathway is the biosynthesis of 6-hydroxymellein by the polyketide synthase cdmE. The prenyltransferase cdmH acts as a 6-hydroxymellein 5-farnesyltransferase and produces the hydrophobic metabolite verruculide C. The FAD-dependent monooxygenase cdmI further converts verruculide C into verruculide B. The terpene cyclase cdmG then produced the pentacyclic molecule 3-hydroxypentacecilide A, the backbone structure of chrodrimanin B, via folding the farnesyl moiety of the substrate into the chair-boat conformation. The short-chain dehydrogenase/reductase cdmF functions as the 3-OH dehydrogenase that oxidizes the C-3 hydroxyl group of 3-hydroxypentacecilide A and produces chrodrimanin C, the dehydrogenated product of 3-hydroxypentacecilide A. The cytochrome P450 monooxygenase cdmJ then accepts both 3-hydroxypentacecilide A and chrodrimanin C and functions as a C-7-beta-hydroxylase to produce respectively chrodrimanin H and chrodrimanin F. The dioxygenase cdmA accepts chrodrimanin H to afford chrodrimanin E, which is further transformed to chrodrimanin A by the dioxygenase cdmD. CdmA can also accept chrodrimanin C as substrate to convert it into verruculide A, which is further converted into chrodrimanin T by cdmD. The last step of the biosynthesis is proposed to be performed by the acetyltransferase cdmC which acetylates chrodrimanin A to yield chrodrimanin B. The pathway may also lead to the production of additional shunt products, including chrodrimanins T and U. This Talaromyces verruculosus (Penicillium verruculosum) protein is Terpene cyclase cdmG.